The chain runs to 353 residues: Dihydroorotate dehydrogenase (quinone) (353 aa).

FMN contacts are provided by residues 67 to 71 (AGFDK) and Thr-91. Lys-71 contributes to the substrate binding site. 116–120 (NRMGF) lines the substrate pocket. The FMN site is built by Asn-144 and Asn-177. Residue Asn-177 participates in substrate binding. Catalysis depends on Ser-180, which acts as the Nucleophile. Asn-182 provides a ligand contact to substrate. FMN-binding residues include Lys-213 and Thr-241. 242 to 243 (NT) serves as a coordination point for substrate. FMN is bound by residues Gly-265, Gly-294, and 315–316 (YT).

Belongs to the dihydroorotate dehydrogenase family. Type 2 subfamily. Monomer. Requires FMN as cofactor.

The protein localises to the cell membrane. It carries out the reaction (S)-dihydroorotate + a quinone = orotate + a quinol. The protein operates within pyrimidine metabolism; UMP biosynthesis via de novo pathway; orotate from (S)-dihydroorotate (quinone route): step 1/1. Functionally, catalyzes the conversion of dihydroorotate to orotate with quinone as electron acceptor. This chain is Dihydroorotate dehydrogenase (quinone), found in Mycobacteroides abscessus (strain ATCC 19977 / DSM 44196 / CCUG 20993 / CIP 104536 / JCM 13569 / NCTC 13031 / TMC 1543 / L948) (Mycobacterium abscessus).